The following is a 396-amino-acid chain: NADH-quinone oxidoreductase subunit D (396 aa).

It belongs to the complex I 49 kDa subunit family. In terms of assembly, NDH-1 is composed of 14 different subunits. Subunits NuoB, C, D, E, F, and G constitute the peripheral sector of the complex.

The protein resides in the cell inner membrane. The catalysed reaction is a quinone + NADH + 5 H(+)(in) = a quinol + NAD(+) + 4 H(+)(out). In terms of biological role, NDH-1 shuttles electrons from NADH, via FMN and iron-sulfur (Fe-S) centers, to quinones in the respiratory chain. The immediate electron acceptor for the enzyme in this species is believed to be ubiquinone. Couples the redox reaction to proton translocation (for every two electrons transferred, four hydrogen ions are translocated across the cytoplasmic membrane), and thus conserves the redox energy in a proton gradient. This is NADH-quinone oxidoreductase subunit D from Rhizobium johnstonii (strain DSM 114642 / LMG 32736 / 3841) (Rhizobium leguminosarum bv. viciae).